Reading from the N-terminus, the 402-residue chain is MLSFGLCAVCGQVTTGKNFGVISCRSCAAFFRRAPTWSRRFPECVKASCAIFENGKFKCKKCRLKRCQEVGMDVKKIQQNRDLISTSNMFQKRVTLIFGPAHSMSTFLGRPSFLLHCEPELASHSKTIIDVSYLVDVARKIFEKDATISHKSSNYYNSLELLTLALDAFRPKDIDKKLTRLTKIGKNESLLMWEQSFLRAAEWFSNLPSFMKLEDWMKLDILKSSWLAWTRLEKRCEAADYQKSKILENGVFMCGNGSCLAIAEYEVDLSWCTNYTAEQLKYYLSPDSEGQKCIEDLIELSPSSTEVNFMILQLTLHHAGKKSQGRLLEATENIIEAQANHLHSYYVEKVKMPNYSARLAKMMKINRGIAGEMRCRREKNQIARVFDIMKVEFSDPEMFELT.

Positions 4-79 form a DNA-binding region, nuclear receptor; sequence FGLCAVCGQV…VGMDVKKIQQ (76 aa). NR C4-type zinc fingers lie at residues 7–27 and 44–67; these read CAVC…CRSC and CVKA…LKRC. Residues 154–402 enclose the NR LBD domain; sequence NYYNSLELLT…FSDPEMFELT (249 aa).

This sequence belongs to the nuclear hormone receptor family.

The protein localises to the nucleus. Orphan nuclear receptor. The chain is Nuclear hormone receptor family member nhr-96 (nhr-96) from Caenorhabditis elegans.